The primary structure comprises 353 residues: Photosystem II protein D1 (353 aa).

T2 carries the post-translational modification N-acetylthreonine. T2 is modified (phosphothreonine). Helical transmembrane passes span 29–46 (YIGW…TATS), 118–133 (HFFL…EWEL), and 142–156 (WIAV…AATA). H118 lines the chlorophyll a pocket. Y126 is a pheophytin a binding site. Residues D170 and E189 each coordinate [CaMn4O5] cluster. The helical transmembrane segment at 197-218 (FHMLGVAGVFGGSLFSAMHGSL) threads the bilayer. H198 lines the chlorophyll a pocket. Residues H215 and 264 to 265 (SF) contribute to the a quinone site. Fe cation is bound at residue H215. H272 lines the Fe cation pocket. Residues 274-288 (FLAAWPVVGIWFTAL) traverse the membrane as a helical segment. Positions 332, 333, 342, and 344 each coordinate [CaMn4O5] cluster. The propeptide occupies 345 to 353 (SVEAPSVNG).

The protein belongs to the reaction center PufL/M/PsbA/D family. In terms of assembly, PSII is composed of 1 copy each of membrane proteins PsbA, PsbB, PsbC, PsbD, PsbE, PsbF, PsbH, PsbI, PsbJ, PsbK, PsbL, PsbM, PsbT, PsbX, PsbY, PsbZ, Psb30/Ycf12, at least 3 peripheral proteins of the oxygen-evolving complex and a large number of cofactors. It forms dimeric complexes. Requires The D1/D2 heterodimer binds P680, chlorophylls that are the primary electron donor of PSII, and subsequent electron acceptors. It shares a non-heme iron and each subunit binds pheophytin, quinone, additional chlorophylls, carotenoids and lipids. D1 provides most of the ligands for the Mn4-Ca-O5 cluster of the oxygen-evolving complex (OEC). There is also a Cl(-1) ion associated with D1 and D2, which is required for oxygen evolution. The PSII complex binds additional chlorophylls, carotenoids and specific lipids. as cofactor. Post-translationally, tyr-161 forms a radical intermediate that is referred to as redox-active TyrZ, YZ or Y-Z. In terms of processing, C-terminally processed by CTPA; processing is essential to allow assembly of the oxygen-evolving complex and thus photosynthetic growth.

The protein localises to the plastid. Its subcellular location is the chloroplast thylakoid membrane. The catalysed reaction is 2 a plastoquinone + 4 hnu + 2 H2O = 2 a plastoquinol + O2. Its function is as follows. Photosystem II (PSII) is a light-driven water:plastoquinone oxidoreductase that uses light energy to abstract electrons from H(2)O, generating O(2) and a proton gradient subsequently used for ATP formation. It consists of a core antenna complex that captures photons, and an electron transfer chain that converts photonic excitation into a charge separation. The D1/D2 (PsbA/PsbD) reaction center heterodimer binds P680, the primary electron donor of PSII as well as several subsequent electron acceptors. The chain is Photosystem II protein D1 from Chaetosphaeridium globosum (Charophycean green alga).